The chain runs to 115 residues: Large ribosomal subunit protein bL19 (115 aa).

The protein belongs to the bacterial ribosomal protein bL19 family.

In terms of biological role, this protein is located at the 30S-50S ribosomal subunit interface and may play a role in the structure and function of the aminoacyl-tRNA binding site. In Kosmotoga olearia (strain ATCC BAA-1733 / DSM 21960 / TBF 19.5.1), this protein is Large ribosomal subunit protein bL19.